The chain runs to 336 residues: Cell division protein ZipA (336 aa).

The Periplasmic segment spans residues 1-6 (MEDLQL). Residues 7 to 27 (VLFVLGAIAIIAVLVHGFWSI) traverse the membrane as a helical segment. At 28 to 336 (RKQQPKPIKE…DYLRRIKAIV (309 aa)) the chain is on the cytoplasmic side. Disordered stretches follow at residues 31–118 (QPKP…PVRA) and 174–200 (YGAT…EPLG). Polar residues predominate over residues 73–91 (LPSSRNHTSVPVMTLQKAS). The span at 108–118 (TTAERAEPVRA) shows a compositional bias: basic and acidic residues. The span at 179 to 193 (QASPQPASPVQSQAP) shows a compositional bias: low complexity.

This sequence belongs to the ZipA family. In terms of assembly, interacts with FtsZ via their C-terminal domains.

The protein localises to the cell inner membrane. Functionally, essential cell division protein that stabilizes the FtsZ protofilaments by cross-linking them and that serves as a cytoplasmic membrane anchor for the Z ring. Also required for the recruitment to the septal ring of downstream cell division proteins. This is Cell division protein ZipA from Shewanella denitrificans (strain OS217 / ATCC BAA-1090 / DSM 15013).